Reading from the N-terminus, the 296-residue chain is D-alanine--D-alanine ligase (296 aa).

Residues 99–292 (TYRVLDGYVN…FEELVDAIIQ (194 aa)) form the ATP-grasp domain. 125–176 (GFPCVIKPRKEGSSIGVHICDNSNQLYNDLSEELKKYNEMMIQRYIEGRELT) is an ATP binding site. Mg(2+)-binding residues include Asp-247, Glu-259, and Asn-261.

This sequence belongs to the D-alanine--D-alanine ligase family. The cofactor is Mg(2+). Mn(2+) is required as a cofactor.

The protein resides in the cytoplasm. The enzyme catalyses 2 D-alanine + ATP = D-alanyl-D-alanine + ADP + phosphate + H(+). It functions in the pathway cell wall biogenesis; peptidoglycan biosynthesis. Its function is as follows. Cell wall formation. The sequence is that of D-alanine--D-alanine ligase from Pseudothermotoga lettingae (strain ATCC BAA-301 / DSM 14385 / NBRC 107922 / TMO) (Thermotoga lettingae).